The sequence spans 130 residues: Small ribosomal subunit protein uS9 (130 aa).

It belongs to the universal ribosomal protein uS9 family.

This is Small ribosomal subunit protein uS9 from Syntrophobacter fumaroxidans (strain DSM 10017 / MPOB).